Consider the following 694-residue polypeptide: Prolyl 3-hydroxylase 2 (694 aa).

An N-terminal signal peptide occupies residues 1–23 (MAPGSRSWGAVLLLAAMLPAACG). TPR repeat units follow at residues 35-68 (FDAL…RREL), 136-169 (RVPY…NPEH), 196-229 (HMED…YYAE), and 292-325 (PLHY…HPDD). The stretch at 386–418 (KRYGARQDEHSVPSSISSEPEDGPRLSLTKKPT) forms a coiled coil. The segment at 395 to 427 (HSVPSSISSEPEDGPRLSLTKKPTPKPDRELKE) is disordered. 2 N-linked (GlcNAc...) asparagine glycosylation sites follow: asparagine 446 and asparagine 535. Residues 543 to 657 (THLVCRTALS…RCAVALWFTL (115 aa)) enclose the Fe2OG dioxygenase domain. Residues histidine 566, aspartate 568, and histidine 638 each coordinate Fe cation. Arginine 648 is a catalytic residue. Residues 691-694 (KDEL) carry the Prevents secretion from ER motif.

It belongs to the leprecan family. Requires Fe cation as cofactor. The cofactor is L-ascorbate.

The protein localises to the endoplasmic reticulum. The protein resides in the sarcoplasmic reticulum. It is found in the golgi apparatus. The catalysed reaction is L-prolyl-[collagen] + 2-oxoglutarate + O2 = trans-3-hydroxy-L-prolyl-[collagen] + succinate + CO2. Functionally, prolyl 3-hydroxylase that catalyzes the post-translational formation of 3-hydroxyproline on collagens. Contributes to proline 3-hydroxylation of collagen COL4A1 and COL1A1 in tendons, the eye sclera and in the eye lens capsule. Has high activity with the type IV collagen COL4A1, and lower activity with COL1A1. Catalyzes hydroxylation of the first Pro in Gly-Pro-Hyp sequences where Hyp is 4-hydroxyproline. Has no activity on substrates that lack 4-hydroxyproline in the third position. The protein is Prolyl 3-hydroxylase 2 of Gallus gallus (Chicken).